A 412-amino-acid chain; its full sequence is Candidapepsin-2 (412 aa).

Residues 1–25 (MTTIAIFTKNVLLAIAFALFAQGAA) constitute a signal peptide (or 18, or 21). The propeptide at 26–61 (IPDPAKRDDNPGFVALDFEVTRKPLDVNATSELSKR) is activation peptide. Asn-53 carries N-linked (GlcNAc...) asparagine glycosylation. Residues 75–383 (YGIRVSVGSN…LDKETVLSRS (309 aa)) form the Peptidase A1 domain. Asp-93 is an active-site residue. Cys-108 and Cys-113 form a disulfide bridge. The active site involves Asp-273. Cys-311 and Cys-345 are oxidised to a cystine.

It belongs to the peptidase A1 family. Post-translationally, O-glycosylated.

The protein resides in the secreted. It catalyses the reaction Preferential cleavage at the carboxyl of hydrophobic amino acids, but fails to cleave 15-Leu-|-Tyr-16, 16-Tyr-|-Leu-17 and 24-Phe-|-Phe-25 of insulin B chain. Activates trypsinogen, and degrades keratin.. This Candida parapsilosis (Yeast) protein is Candidapepsin-2 (SAPP2).